The chain runs to 387 residues: Cysteine desulfurase (387 aa).

Residues 72 to 73, Asn152, Gln180, and 200 to 202 contribute to the pyridoxal 5'-phosphate site; these read GT and SAH. Lys203 is subject to N6-(pyridoxal phosphate)lysine. Residue Thr238 coordinates pyridoxal 5'-phosphate. Catalysis depends on Cys323, which acts as the Cysteine persulfide intermediate. Cys323 serves as a coordination point for [2Fe-2S] cluster.

Belongs to the class-V pyridoxal-phosphate-dependent aminotransferase family. NifS/IscS subfamily. As to quaternary structure, homodimer. Pyridoxal 5'-phosphate is required as a cofactor.

It carries out the reaction (sulfur carrier)-H + L-cysteine = (sulfur carrier)-SH + L-alanine. Its function is as follows. Catalyzes the removal of elemental sulfur atoms from cysteine to produce alanine. Seems to participate in the biosynthesis of the nitrogenase metalloclusters by providing the inorganic sulfur required for the Fe-S core formation. This chain is Cysteine desulfurase, found in Cereibacter sphaeroides (Rhodobacter sphaeroides).